The chain runs to 904 residues: Polycystin-2 (904 aa).

A disordered region spans residues 1 to 102 (MSSSRVRPQA…SSSGGVPGNF (102 aa)). Residues 1-155 (MSSSRVRPQA…NSNREMYLKT (155 aa)) lie on the Cytoplasmic side of the membrane. Low complexity predominate over residues 8–20 (PQAPQSPAASASA). The segment covering 26–38 (EGIEMEKMHHEEV) has biased composition (basic and acidic residues). Residues 86-96 (SVSTTSSSSSG) show a composition bias toward low complexity. The helical transmembrane segment at 156 to 177 (VLREMITYILFLLTLCIITYGM) threads the bilayer. Residues 178-404 (VSTNMYYYTK…TVRLLRYVSS (227 aa)) lie on the Extracellular side of the membrane. 3 N-linked (GlcNAc...) asparagine glycosylation sites follow: N235, N241, and N264. An intrachain disulfide couples C267 to C280. The N-linked (GlcNAc...) asparagine glycan is linked to N298. Residues 405–425 (WDYFVGMCEVSFCLFVLYYLV) traverse the membrane as a helical segment. The Cytoplasmic segment spans residues 426–441 (EEALEIRLHRLRYFKS). The helical transmembrane segment at 442-462 (LWNCLDVLIVALSVPAIIMNI) threads the bilayer. Residues 463–489 (CRTSAVSHRLHFLLENHSTYPNFEPLA) are Extracellular-facing. Residue N478 is glycosylated (N-linked (GlcNAc...) asparagine). A helical membrane pass occupies residues 490 to 510 (RLQVHFNNLAAIIVFLSWVKL). Over 511–534 (FKFINFNKTMNQLSTTMSRCAKDL) the chain is Cytoplasmic. The chain crosses the membrane as a helical span at residues 535 to 556 (MGFAIMFFIVFLAYAQLAYLVF). Residues 557 to 568 (GTQVNDFSTFQA) are Extracellular-facing. Residues 569–583 (CIFTQFRIILGDFDF) constitute an intramembrane region (pore-forming). L578 contacts Ca(2+). The Selectivity filter motif lies at 578–580 (LGD). Residues 584–591 (SEIEEADS) are Extracellular-facing. A helical membrane pass occupies residues 592 to 612 (VLGPIYFTTFVFFIFMILLNM). The Cytoplasmic segment spans residues 613-904 (FLAIINDTYS…DAAASGPAHL (292 aa)). In terms of domain architecture, EF-hand 1 spans 687–722 (HSDAEIEAIFAKYDLDGDQELTEHEHQQMRDDLEKE). Residues D700, D702, D704, E706, and E711 each coordinate Ca(2+). Positions 708–732 (TEHEHQQMRDDLEKEREDLDLEHSS) are enriched in basic and acidic residues. 2 disordered regions span residues 708 to 770 (TEHE…SSGG) and 854 to 904 (ESDD…PAHL). The interval 740-759 (RSFSRSQDDSEEDDDEDSGH) is linker. Residues 768–786 (SGGVSYEEFQVLVRRVDRM) form the EF-hand 2 domain. A coiled-coil region spans residues 770-809 (GVSYEEFQVLVRRVDRMEHSIGSIVSKIDAVIVKLEAMER). Residues 878 to 890 (LRPRSSRPPSSLS) show a composition bias toward low complexity.

This sequence belongs to the polycystin family. In terms of assembly, homotetramer. Component of the heterotetrameric polycystin channel complex with pkd1; the tetramer contains one pkd1 chain and three pkd2 chains. Interacts with pkd1l1. Post-translationally, phosphorylated. Phosphorylation is important for protein function; a mutant human construct that lacks the N-terminal phosphorylation sites cannot complement a zebrafish pkd2-deficient mutant. N-glycosylated. The four subunits in a tetramer probably differ in the extent of glycosylation; simultaneous glycosylation of all experimentally validated sites would probably create steric hindrance. In terms of processing, sumoylated by SUMO1; sumoylation regulates PKD2 membrane recycling. As to expression, detected along cilia and at the cilium basal body in Kupffer's vesicle at the 10 somite stage. Detected in heart at 48hpf. Detected in muscle and pronephric kidney at 48 hpf. Detected on trunk muscle sarcolemma and sarcomere, on ependymal cell cilia in brain, at the apical cell membrane in epithelial cells in the ear, at the lateral line organ and olfactory placode at 56 hpf. Detected in adult kidney (at protein level).

It is found in the basolateral cell membrane. Its subcellular location is the cell membrane. The protein localises to the sarcolemma. It localises to the cytoplasm. The protein resides in the myofibril. It is found in the sarcomere. Its subcellular location is the sarcoplasmic reticulum membrane. The protein localises to the apical cell membrane. It localises to the endoplasmic reticulum membrane. The protein resides in the cell projection. It is found in the cilium. Its subcellular location is the cytoskeleton. The protein localises to the cilium basal body. It localises to the cytoplasmic vesicle membrane. It catalyses the reaction K(+)(in) = K(+)(out). The enzyme catalyses Na(+)(in) = Na(+)(out). It carries out the reaction Ca(2+)(in) = Ca(2+)(out). Channel activity is regulated by phosphorylation. Channel activity is regulated by intracellular Ca(2+). Forms a nonselective cation channel. Can function as a homotetrameric ion channel or can form heteromer with PKD1. Displays distinct function depending on its subcellular localization and regulation by its binding partners. In the primary cilium functions as a cation channel, with a preference for monovalent cations over divalent cations that allows K(+), Na(+) and Ca(2+) influx, with low selectivity for Ca(2+). In the endoplasmic reticulum, likely functions as a K(+) channel to facilitate Ca(2+) release. Required for normal oscillation of Ca(2+) levels within cilia; these oscillations of the intraciliary Ca(2+) levels can trigger cytoplasmic Ca(2+) signaling cascades. Required for normal temporal variation of the intracellular Ca(2+) levels in the heart. Plays a role in fluid-flow mechanosensation. Required for normal specification of the body left-right axis during embryogenesis, most likely via its role in ciliary Ca(2+) oscillations in Kupffer's vesicle. In Danio rerio (Zebrafish), this protein is Polycystin-2.